Consider the following 184-residue polypeptide: Protein PLANT CADMIUM RESISTANCE 5 (184 aa).

A compositionally biased stretch (polar residues) spans 1–26 (MGRPVGQTNQAQPSVQHTASPSNKVS). Positions 1–33 (MGRPVGQTNQAQPSVQHTASPSNKVSHNGGIGK) are disordered. The helical transmembrane segment at 94 to 114 (AGLLYGALFFTGASFVYSYMF) threads the bilayer.

It belongs to the cornifelin family.

It is found in the membrane. Functionally, may be involved in heavy metals transport. In Arabidopsis thaliana (Mouse-ear cress), this protein is Protein PLANT CADMIUM RESISTANCE 5 (PCR5).